A 359-amino-acid chain; its full sequence is tRNA-specific 2-thiouridylase MnmA (359 aa).

ATP is bound by residues 9–16 (GMSGGVDS) and Met-35. The Nucleophile role is filled by Cys-105. Cysteines 105 and 203 form a disulfide. Residue Gly-129 participates in ATP binding. Residues 153–155 (KDQ) form an interaction with tRNA region. Cys-203 (cysteine persulfide intermediate) is an active-site residue. Residues 309–310 (RY) form an interaction with tRNA region.

This sequence belongs to the MnmA/TRMU family.

The protein resides in the cytoplasm. It catalyses the reaction S-sulfanyl-L-cysteinyl-[protein] + uridine(34) in tRNA + AH2 + ATP = 2-thiouridine(34) in tRNA + L-cysteinyl-[protein] + A + AMP + diphosphate + H(+). Functionally, catalyzes the 2-thiolation of uridine at the wobble position (U34) of tRNA, leading to the formation of s(2)U34. The polypeptide is tRNA-specific 2-thiouridylase MnmA (Acetivibrio thermocellus (strain ATCC 27405 / DSM 1237 / JCM 9322 / NBRC 103400 / NCIMB 10682 / NRRL B-4536 / VPI 7372) (Clostridium thermocellum)).